Reading from the N-terminus, the 172-residue chain is Peptide methionine sulfoxide reductase MsrA (172 aa).

Residue cysteine 14 is part of the active site.

This sequence belongs to the MsrA Met sulfoxide reductase family.

It catalyses the reaction L-methionyl-[protein] + [thioredoxin]-disulfide + H2O = L-methionyl-(S)-S-oxide-[protein] + [thioredoxin]-dithiol. The catalysed reaction is [thioredoxin]-disulfide + L-methionine + H2O = L-methionine (S)-S-oxide + [thioredoxin]-dithiol. Functionally, has an important function as a repair enzyme for proteins that have been inactivated by oxidation. Catalyzes the reversible oxidation-reduction of methionine sulfoxide in proteins to methionine. The protein is Peptide methionine sulfoxide reductase MsrA of Streptomyces coelicolor (strain ATCC BAA-471 / A3(2) / M145).